A 913-amino-acid polypeptide reads, in one-letter code: DNA polymerase I (913 aa).

The region spanning 1 to 305 (MSQAPLVLVD…AGENGEAETP (305 aa)) is the 5'-3' exonuclease domain. The 3'-5' exonuclease domain maps to 306 to 501 (IQAEVDYDVV…LHQALWQKLE (196 aa)). The polymerase stretch occupies residues 505-913 (SLARVLTDIE…GVGSNWDEAH (409 aa)).

The protein belongs to the DNA polymerase type-A family. Single-chain monomer with multiple functions.

The enzyme catalyses DNA(n) + a 2'-deoxyribonucleoside 5'-triphosphate = DNA(n+1) + diphosphate. Its function is as follows. In addition to polymerase activity, this DNA polymerase exhibits 3'-5' and 5'-3' exonuclease activity. The protein is DNA polymerase I (polA) of Pseudomonas aeruginosa (strain ATCC 15692 / DSM 22644 / CIP 104116 / JCM 14847 / LMG 12228 / 1C / PRS 101 / PAO1).